The sequence spans 448 residues: Glutamyl-tRNA reductase (448 aa).

Substrate-binding positions include 49-52 (TCNR), Ser109, 114-116 (ETQ), and Gln120. Residue Cys50 is the Nucleophile of the active site. 189-194 (GAGEMS) lines the NADP(+) pocket.

Belongs to the glutamyl-tRNA reductase family. Homodimer.

The enzyme catalyses (S)-4-amino-5-oxopentanoate + tRNA(Glu) + NADP(+) = L-glutamyl-tRNA(Glu) + NADPH + H(+). The protein operates within porphyrin-containing compound metabolism; protoporphyrin-IX biosynthesis; 5-aminolevulinate from L-glutamyl-tRNA(Glu): step 1/2. Functionally, catalyzes the NADPH-dependent reduction of glutamyl-tRNA(Glu) to glutamate 1-semialdehyde (GSA). This is Glutamyl-tRNA reductase from Staphylococcus aureus (strain Mu3 / ATCC 700698).